The following is an 80-amino-acid chain: Photosystem II extrinsic protein V (80 aa).

Met47 is a binding site for heme.

The protein belongs to the cytochrome c family. PsbV subfamily. As to quaternary structure, PSII is composed of 1 copy each of membrane proteins PsbA, PsbB, PsbC, PsbD, PsbE, PsbF, PsbH, PsbI, PsbJ, PsbK, PsbL, PsbM, PsbT, PsbY, PsbZ, Psb30/Ycf12, at least 3 peripheral proteins of the oxygen-evolving complex and a large number of cofactors. It forms dimeric complexes. Heme serves as cofactor.

Its subcellular location is the plastid. It localises to the chloroplast thylakoid membrane. In terms of biological role, one of the extrinsic, lumenal subunits of photosystem II (PSII). PSII is a light-driven water plastoquinone oxidoreductase, using light energy to abstract electrons from H(2)O, generating a proton gradient subsequently used for ATP formation. The extrinsic proteins stabilize the structure of photosystem II oxygen-evolving complex (OEC), the ion environment of oxygen evolution and protect the OEC against heat-induced inactivation. The sequence is that of Photosystem II extrinsic protein V from Thalassiosira weissflogii (Marine diatom).